We begin with the raw amino-acid sequence, 693 residues long: Periplasmic alpha-galactoside-binding protein (693 aa).

Positions 1–20 (MKTHRLNMTASLLIGISAFA) are cleaved as a signal peptide.

The protein belongs to the bacterial solute-binding protein 5 family.

It is found in the periplasm. Involved in the transport of alpha-galactosides. Required for the utilization of raffinose and melibiose. Probably acts as a periplasmic substrate-binding protein for a transport system. The polypeptide is Periplasmic alpha-galactoside-binding protein (Rhizobium meliloti (strain 1021) (Ensifer meliloti)).